The following is a 294-amino-acid chain: Thymidylate synthase 1/2 (294 aa).

DUMP is bound by residues arginine 29 and 154–155 (RR). The Nucleophile role is filled by cysteine 174. Residues 194 to 197 (RSGD), asparagine 205, and 235 to 237 (HVY) contribute to the dUMP site. A (6R)-5,10-methylene-5,6,7,8-tetrahydrofolate-binding site is contributed by aspartate 197.

This sequence belongs to the thymidylate synthase family.

The enzyme catalyses dUMP + (6R)-5,10-methylene-5,6,7,8-tetrahydrofolate = 7,8-dihydrofolate + dTMP. Its pathway is pyrimidine metabolism; dTTP biosynthesis. In Encephalitozoon cuniculi (strain GB-M1) (Microsporidian parasite), this protein is Thymidylate synthase 1/2 (TS-1).